Consider the following 141-residue polypeptide: Nucleoside triphosphatase NudI (141 aa).

One can recognise a Nudix hydrolase domain in the interval 1 to 141 (MRQRTIVCPL…RHTLALKGLL (141 aa)). The Nudix box motif lies at 38–59 (GGVEPGERIEEALRREIREELG).

This sequence belongs to the Nudix hydrolase family. NudI subfamily. Monomer. It depends on Mg(2+) as a cofactor.

It carries out the reaction a ribonucleoside 5'-triphosphate + H2O = a ribonucleoside 5'-phosphate + diphosphate + H(+). The catalysed reaction is a 2'-deoxyribonucleoside 5'-triphosphate + H2O = a 2'-deoxyribonucleoside 5'-phosphate + diphosphate + H(+). The enzyme catalyses dUTP + H2O = dUMP + diphosphate + H(+). It catalyses the reaction dTTP + H2O = dTMP + diphosphate + H(+). It carries out the reaction dCTP + H2O = dCMP + diphosphate + H(+). Functionally, catalyzes the hydrolysis of nucleoside triphosphates, with a preference for pyrimidine deoxynucleoside triphosphates (dUTP, dTTP and dCTP). The polypeptide is Nucleoside triphosphatase NudI (Salmonella paratyphi B (strain ATCC BAA-1250 / SPB7)).